A 315-amino-acid polypeptide reads, in one-letter code: Tyrosine recombinase XerC (315 aa).

A Core-binding (CB) domain is found at 1-103 (MITSFYAFLD…AIKSFARFCV (103 aa)). One can recognise a Tyr recombinase domain in the interval 124-306 (ELPSPLTYEQ…SMKLKKQIHD (183 aa)). Active-site residues include Arg164, Lys188, His258, Arg261, and His284. Tyr293 (O-(3'-phospho-DNA)-tyrosine intermediate) is an active-site residue.

The protein belongs to the 'phage' integrase family. XerC subfamily. Forms a cyclic heterotetrameric complex composed of two molecules of XerC and two molecules of XerD.

It localises to the cytoplasm. Functionally, site-specific tyrosine recombinase, which acts by catalyzing the cutting and rejoining of the recombining DNA molecules. The XerC-XerD complex is essential to convert dimers of the bacterial chromosome into monomers to permit their segregation at cell division. It also contributes to the segregational stability of plasmids. This is Tyrosine recombinase XerC from Chlamydia trachomatis serovar L2b (strain UCH-1/proctitis).